The primary structure comprises 284 residues: L-ribulose-5-phosphate 3-epimerase UlaE (284 aa).

Belongs to the L-ribulose-5-phosphate 3-epimerase family.

It carries out the reaction L-ribulose 5-phosphate = L-xylulose 5-phosphate. The protein operates within cofactor degradation; L-ascorbate degradation; D-xylulose 5-phosphate from L-ascorbate: step 3/4. Its function is as follows. Catalyzes the isomerization of L-xylulose-5-phosphate to L-ribulose-5-phosphate. Is involved in the anaerobic L-ascorbate utilization. The protein is L-ribulose-5-phosphate 3-epimerase UlaE of Salmonella dublin (strain CT_02021853).